Reading from the N-terminus, the 118-residue chain is Small ribosomal subunit protein bTHXc (118 aa).

Residues 1 to 55 (MASLILGAPPRVTVALPSSRLSSSHSETAGVSLSCFTHQFSLSTSSSSSIPLVYC) constitute a chloroplast transit peptide. The segment at 61–118 (KTAKGKRFNHSFGNARPRNKSKGRGPERVPVPPAPPRKDKFENDEKIKIDIDESLFSN) is disordered. Positions 96 to 111 (PRKDKFENDEKIKIDI) are enriched in basic and acidic residues. Residue Ser-117 is modified to Phosphoserine.

It belongs to the bacterial ribosomal protein bTHX family. In terms of assembly, part of the 30S ribosomal subunit.

Its subcellular location is the plastid. The protein resides in the chloroplast. This chain is Small ribosomal subunit protein bTHXc (RPS31), found in Arabidopsis thaliana (Mouse-ear cress).